Consider the following 217-residue polypeptide: Peroxiredoxin (217 aa).

A Thioredoxin domain is found at 2–159; that stretch reads AVIGEKFPDV…VVRLVKALQT (158 aa). The Cysteine sulfenic acid (-SOH) intermediate role is filled by Cys46. Arg122 contributes to the substrate binding site.

Belongs to the peroxiredoxin family. Prx6 subfamily. In terms of assembly, homodecamer. Pentamer of dimers that assemble into a ring structure.

It localises to the cytoplasm. The catalysed reaction is a hydroperoxide + [thioredoxin]-dithiol = an alcohol + [thioredoxin]-disulfide + H2O. Its function is as follows. Thiol-specific peroxidase that catalyzes the reduction of hydrogen peroxide and organic hydroperoxides to water and alcohols, respectively. Plays a role in cell protection against oxidative stress by detoxifying peroxides. The polypeptide is Peroxiredoxin (Methanococcus vannielii (strain ATCC 35089 / DSM 1224 / JCM 13029 / OCM 148 / SB)).